Here is a 124-residue protein sequence, read N- to C-terminus: Small ribosomal subunit protein uS12 (124 aa).

The interval 105–124 is disordered; it reads SGVNDRRQGRSKYGAKRPKS. The segment covering 113-124 has biased composition (basic residues); the sequence is GRSKYGAKRPKS.

This sequence belongs to the universal ribosomal protein uS12 family. As to quaternary structure, part of the 30S ribosomal subunit. Contacts proteins S8 and S17. May interact with IF1 in the 30S initiation complex.

In terms of biological role, with S4 and S5 plays an important role in translational accuracy. Its function is as follows. Interacts with and stabilizes bases of the 16S rRNA that are involved in tRNA selection in the A site and with the mRNA backbone. Located at the interface of the 30S and 50S subunits, it traverses the body of the 30S subunit contacting proteins on the other side and probably holding the rRNA structure together. The combined cluster of proteins S8, S12 and S17 appears to hold together the shoulder and platform of the 30S subunit. This chain is Small ribosomal subunit protein uS12, found in Idiomarina loihiensis (strain ATCC BAA-735 / DSM 15497 / L2-TR).